Here is a 463-residue protein sequence, read N- to C-terminus: MDEGDEDLISGRGFTEGARKAGPKPVGVLAVVGRPNVGKSSLVNRILGRRAAVVEDTPGVTRDRVSYDAEWAGTDFKLVDTGGWEADVEGIESAIASQAQVAVTLADAVVFVVDGQVGMTTTDERIVKMLRAAGKPVVLAVNKIDDQASEYLAAEFWKLGLGEPYSISAMHGRGVGDLLDVALDKLKQAEKTSGYLTPSGLRRVALVGRPNVGKSSLLNQLAREERAVVNDLAGTTRDPVDEIVNIDGEDWLFIDTAGIKRRQHKLTGAEYYSSLRTQAAIERCELALILFDASQPVSDQDLKVMSTAVDAGRAIVLVFNKWDAMDEFDKQRLERLWNTEFDRVMWAERVNLSAKTGWHTNRLTRAMDKALESWDQRIPTGKLNAFLGKIQAAHPHPLRGGKQPRILFATQASTRPPRFVIFATGFLEHGYRRYIERSLREEFGFEGTPIQISVNIREKKKRK.

A disordered region spans residues 1 to 20 (MDEGDEDLISGRGFTEGARK). EngA-type G domains lie at 27–190 (GVLA…KQAE) and 202–375 (RRVA…ESWD). GTP contacts are provided by residues 33 to 40 (GRPNVGKS), 80 to 84 (DTGGW), 142 to 145 (NKID), 208 to 215 (GRPNVGKS), 255 to 259 (DTAGI), and 320 to 323 (NKWD). One can recognise a KH-like domain in the interval 376 to 458 (QRIPTGKLNA…PIQISVNIRE (83 aa)).

Belongs to the TRAFAC class TrmE-Era-EngA-EngB-Septin-like GTPase superfamily. EngA (Der) GTPase family. Associates with the 50S ribosomal subunit.

GTPase that plays an essential role in the late steps of ribosome biogenesis. This Bifidobacterium longum (strain NCC 2705) protein is GTPase Der.